Consider the following 301-residue polypeptide: NAD kinase (301 aa).

The active-site Proton acceptor is aspartate 73. NAD(+) is bound by residues 73–74 (DG), 160–161 (NE), arginine 188, aspartate 190, alanine 198, 201–206 (TAYNIS), alanine 225, and glutamine 257.

This sequence belongs to the NAD kinase family. A divalent metal cation serves as cofactor.

It is found in the cytoplasm. It catalyses the reaction NAD(+) + ATP = ADP + NADP(+) + H(+). In terms of biological role, involved in the regulation of the intracellular balance of NAD and NADP, and is a key enzyme in the biosynthesis of NADP. Catalyzes specifically the phosphorylation on 2'-hydroxyl of the adenosine moiety of NAD to yield NADP. This chain is NAD kinase, found in Helicobacter hepaticus (strain ATCC 51449 / 3B1).